A 380-amino-acid polypeptide reads, in one-letter code: Serpin B7 (380 aa).

Ser-217 bears the Phosphoserine mark.

This sequence belongs to the serpin family. Ov-serpin subfamily.

The protein localises to the cytoplasm. In terms of biological role, might function as an inhibitor of Lys-specific proteases. Might influence the maturation of megakaryocytes via its action as a serpin. This chain is Serpin B7 (Serpinb7), found in Mus musculus (Mouse).